Reading from the N-terminus, the 524-residue chain is Na(+)/H(+) antiporter NhaG (524 aa).

The next 11 helical transmembrane spans lie at 6–26 (LHHI…ITAI), 33–53 (PYPI…IPLF), 59–79 (FITE…PALL), 98–118 (VLAL…SSMW), 126–146 (AAFV…LSIF), 169–189 (LAVV…DLGI), 193–213 (GLGL…GGVL), 242–262 (FLLA…AALI), 283–303 (FWDV…GLEI), 312–332 (WGLA…AVYI), and 374–394 (DILV…GLTI).

This sequence belongs to the monovalent cation:proton antiporter 1 (CPA1) transporter (TC 2.A.36) family.

It localises to the cell membrane. Its function is as follows. Na(+)/H(+) antiporter that extrudes sodium in exchange for external protons. Can also transport lithium. This chain is Na(+)/H(+) antiporter NhaG (nhaG), found in Bacillus atrophaeus.